The following is a 415-amino-acid chain: 4-hydroxy-3-methylbut-2-en-1-yl diphosphate synthase (flavodoxin) (415 aa).

[4Fe-4S] cluster-binding residues include cysteine 298, cysteine 301, cysteine 344, and glutamate 351.

It belongs to the IspG family. Requires [4Fe-4S] cluster as cofactor.

It carries out the reaction (2E)-4-hydroxy-3-methylbut-2-enyl diphosphate + oxidized [flavodoxin] + H2O + 2 H(+) = 2-C-methyl-D-erythritol 2,4-cyclic diphosphate + reduced [flavodoxin]. The protein operates within isoprenoid biosynthesis; isopentenyl diphosphate biosynthesis via DXP pathway; isopentenyl diphosphate from 1-deoxy-D-xylulose 5-phosphate: step 5/6. In terms of biological role, converts 2C-methyl-D-erythritol 2,4-cyclodiphosphate (ME-2,4cPP) into 1-hydroxy-2-methyl-2-(E)-butenyl 4-diphosphate. The sequence is that of 4-hydroxy-3-methylbut-2-en-1-yl diphosphate synthase (flavodoxin) from Solibacter usitatus (strain Ellin6076).